The primary structure comprises 571 residues: MADGSDLENNHKPELDRSQPGSTSNGSQEQKDPDEIAPEYATGVRLILVMFTIFVSTILVSLEIGIIATAIPGITNEFRRLDDVGWYGSATFILAAAASPLWGKLFKYVDVKWTYLSAVFIFLVGSIVAAAAPNSVSVIIGRAIQGWGASGVLGGTLIVINYVAPPRNHPLLIGTWMAVFMVSTILGPVIGGGFTSGVSWRWCFWINLPVGGPIIVLLLLFLRIPKHIKKVPATWQEIILALDLPGFCLLLVSLVCLTLALQWGGQTKAWNDGSVIATLVMWIVLSIAFLVTEWFQGQRAMTPFSILTLRMTWSNALFCLISYAALYQVMFYLPIYFQSIHGQSAVKSGVNTLPFLAFFALGAVVSGGVIGKTRYTQPFELLGALIMTAGMALIYILDVDSPQAMYIGAEVLFGFGVGICNQIPMTAVQGFSKQEDVSSATGIMVMCQTLSGAYFVAIAQSLFANRMLATVLSGAGHLDPALVLGTGASELQHVFSGEDLTEVIAAYMVGIKDVFAFSLACAAFAVLLSLIIPFKRLPDHGKKDKPATEEAAEEKSEAEGKVSGDKEENHS.

The segment at 1-34 (MADGSDLENNHKPELDRSQPGSTSNGSQEQKDPD) is disordered. Basic and acidic residues predominate over residues 8–17 (ENNHKPELDR). A compositionally biased stretch (polar residues) spans 19–28 (QPGSTSNGSQ). Residue Asn25 is glycosylated (N-linked (GlcNAc...) asparagine). Transmembrane regions (helical) follow at residues 47 to 67 (ILVM…IGII), 86 to 106 (WYGS…GKLF), 120 to 140 (FIFL…SVII), 143 to 163 (AIQG…INYV), 171 to 191 (LLIG…PVIG), 202 to 222 (WCFW…LLFL), 238 to 258 (IILA…VCLT), 275 to 295 (VIAT…TEWF), 317 to 337 (LFCL…PIYF), 350 to 370 (VNTL…GGVI), 379 to 399 (FELL…ILDV), 405 to 425 (MYIG…QIPM), 443 to 463 (IMVM…QSLF), and 514 to 534 (VFAF…IIPF). A disordered region spans residues 538–571 (PDHGKKDKPATEEAAEEKSEAEGKVSGDKEENHS).

It belongs to the major facilitator superfamily. TCR/Tet family.

The protein localises to the cell membrane. In terms of biological role, efflux pump that is probably involved in the export of dehydrocurvularin. The chain is Dehydrocurvularin exporter from Aspergillus terreus.